A 487-amino-acid polypeptide reads, in one-letter code: DNA-dependent metalloprotease SPRTN (487 aa).

At Met1 the chain carries N-acetylmethionine. The 168-residue stretch at 45–212 (LQGLFVLFND…KTCGGTYIKI (168 aa)) folds into the SprT-like domain. His111 is a Zn(2+) binding site. Residue Glu112 is part of the active site. Positions 115 and 130 each coordinate Zn(2+). Positions 219 to 248 (SKKGKGKTKLRKQPVSEAENKDKPNRGEKQ) are disordered. Basic residues predominate over residues 220–230 (KKGKGKTKLRK). The residue at position 230 (Lys230) is an N6-acetyllysine. Basic and acidic residues predominate over residues 236–247 (AENKDKPNRGEK). The short motif at 253–261 (FTGKGYVLG) is the SHP-box element. Position 267 is a phosphoserine (Ser267). Polar residues predominate over residues 280–289 (SQEPLSQDHS). The interval 280-317 (SQEPLSQDHSANALRPHSKTEVKFEQNGPSKKTSVASP) is disordered. Lys302 is covalently cross-linked (Glycyl lysine isopeptide (Lys-Gly) (interchain with G-Cter in SUMO2)). The span at 306–317 (NGPSKKTSVASP) shows a compositional bias: polar residues. The PIP-box signature appears at 324 to 331 (QNVLSNYF). Residue Lys340 forms a Glycyl lysine isopeptide (Lys-Gly) (interchain with G-Cter in SUMO2); alternate linkage. Residue Lys340 forms a Glycyl lysine isopeptide (Lys-Gly) (interchain with G-Cter in ubiquitin); alternate linkage. Positions 347–379 (GSPVKSLTVGDSTTKSVSAGSQRRVTSSRTSLR) are disordered. Phosphoserine is present on Ser373. The Nuclear localization signal signature appears at 401–412 (GKLPSKRPRIED). Lys413 participates in a covalent cross-link: Glycyl lysine isopeptide (Lys-Gly) (interchain with G-Cter in ubiquitin). Glycyl lysine isopeptide (Lys-Gly) (interchain with G-Cter in SUMO2) cross-links involve residues Lys422 and Lys423. Positions 427–455 (QSGGGDVTSSSHPPAAAQSPSGASGQSRV) are disordered. Residues 435–453 (SSSHPPAAAQSPSGASGQS) are compositionally biased toward low complexity. The UBZ4-type zinc finger occupies 455 to 482 (VVHCPVCQDEVSETQINEHLDWCLERDS). 4 residues coordinate Zn(2+): Cys458, Cys461, His473, and Cys477. A Glycyl lysine isopeptide (Lys-Gly) (interchain with G-Cter in SUMO2) cross-link involves residue Lys486.

It belongs to the Spartan family. In terms of assembly, homodimer. Interacts (VIA PIP-box) with PCNA (when ubiquitinated). Interacts (via its SHP-box) with VCP/p97. Interacts with RAD18. Interacts with KCTD13 and POLD3. Requires Zn(2+) as cofactor. In terms of processing, autocatalytically cleaved in response to double-stranded DNA-binding: autocatalytic cleavage takes place in trans and leads to inactivation. Post-translationally, monoubiquitinated; monoubiquitination promotes exclusion from chromatin. Deubiquitinated by VCPIP1: deubiquitination is required for subsequent acetylation and recruitment to chromatin and DNA damage sites. Acetylated following deubiquitination by VCPIP1, leading to recruitment to chromatin and DNA damage sites. In terms of processing, phosphorylation by CHEK1 promotes recruitment to chromatin.

It localises to the nucleus. Its subcellular location is the chromosome. Its activity is regulated as follows. DNA-binding activates the protease activity: single-stranded DNA-binding specifically activates ability to cleave covalent DNA-protein cross-links (DPCs). In contrast, double-stranded DNA-binding specifically activates autocatalytic cleavage, and subsequent inactivation. Functionally, DNA-dependent metalloendopeptidase that mediates the proteolytic cleavage of covalent DNA-protein cross-links (DPCs) during DNA synthesis, thereby playing a key role in maintaining genomic integrity. DPCs are highly toxic DNA lesions that interfere with essential chromatin transactions, such as replication and transcription, and which are induced by reactive agents, such as UV light or formaldehyde. Associates with the DNA replication machinery and specifically removes DPCs during DNA synthesis. Catalyzes proteolytic cleavage of the HMCES DNA-protein cross-link following unfolding by the BRIP1/FANCJ helicase. Acts as a pleiotropic protease for DNA-binding proteins cross-linked with DNA, such as TOP1, TOP2A, histones H3 and H4. Mediates degradation of DPCs that are not ubiquitinated, while it is not able to degrade ubiquitinated DPCs. SPRTN activation requires polymerase collision with DPCs followed by helicase bypass of DPCs. Involved in recruitment of VCP/p97 to sites of DNA damage. Also acts as an activator of CHEK1 during normal DNA replication by mediating proteolytic cleavage of CHEK1, thereby promoting CHEK1 removal from chromatin and subsequent activation. Does not activate CHEK1 in response to DNA damage. May also act as a 'reader' of ubiquitinated PCNA: recruited to sites of UV damage and interacts with ubiquitinated PCNA and RAD18, the E3 ubiquitin ligase that monoubiquitinates PCNA. Facilitates chromatin association of RAD18 and is required for efficient PCNA monoubiquitination, promoting a feed-forward loop to enhance PCNA ubiquitination and translesion DNA synthesis. The chain is DNA-dependent metalloprotease SPRTN from Bos taurus (Bovine).